Reading from the N-terminus, the 90-residue chain is Photosystem I reaction center subunit PsaK 2 (90 aa).

A run of 2 helical transmembrane segments spans residues 20 to 42 (LSVGIIMCLCNVFAFVIGYFAIQ) and 67 to 89 (LATMSFGHILGAGMVLGLASSGI).

Belongs to the PsaG/PsaK family.

The protein resides in the cellular thylakoid membrane. This is Photosystem I reaction center subunit PsaK 2 (psaK2) from Synechocystis sp. (strain ATCC 27184 / PCC 6803 / Kazusa).